We begin with the raw amino-acid sequence, 91 residues long: Acylphosphatase (91 aa).

In terms of domain architecture, Acylphosphatase-like spans 6–91; that stretch reads CMRCYISGRV…WEDYISFDVL (86 aa). Catalysis depends on residues arginine 21 and asparagine 39.

It belongs to the acylphosphatase family.

The catalysed reaction is an acyl phosphate + H2O = a carboxylate + phosphate + H(+). The polypeptide is Acylphosphatase (acyP) (Legionella pneumophila (strain Corby)).